Here is a 185-residue protein sequence, read N- to C-terminus: Photosystem I assembly protein Ycf4 (185 aa).

The next 2 helical transmembrane spans lie at 21–43 and 68–90; these read NFFWACILFLGSLGFLSVGISSY and FYGIAGLFISSYLCCTILWNVGS.

This sequence belongs to the Ycf4 family.

Its subcellular location is the plastid. The protein resides in the chloroplast thylakoid membrane. Seems to be required for the assembly of the photosystem I complex. In Aegilops tauschii (Tausch's goatgrass), this protein is Photosystem I assembly protein Ycf4.